Consider the following 178-residue polypeptide: Ribosome maturation factor RimM (178 aa).

Positions 101–178 constitute a PRC barrel domain; that stretch reads ADEYYWYQLV…VMRVEWDADF (78 aa).

It belongs to the RimM family. In terms of assembly, binds ribosomal protein uS19.

The protein localises to the cytoplasm. In terms of biological role, an accessory protein needed during the final step in the assembly of 30S ribosomal subunit, possibly for assembly of the head region. Essential for efficient processing of 16S rRNA. May be needed both before and after RbfA during the maturation of 16S rRNA. It has affinity for free ribosomal 30S subunits but not for 70S ribosomes. The chain is Ribosome maturation factor RimM from Pseudomonas putida (strain ATCC 47054 / DSM 6125 / CFBP 8728 / NCIMB 11950 / KT2440).